The sequence spans 421 residues: Protein ECERIFERUM 2 (421 aa).

M1 is subject to N-acetylmethionine.

It belongs to the plant acyltransferase family. As to expression, expressed at high levels in the epidermis of stems and young siliques. Expressed in flowers.

The protein localises to the endoplasmic reticulum. The protein resides in the nucleus. Its function is as follows. Involved in biosynthesis of the epicuticular wax. Plays a role in very-long-chain fatty acid (VLCFA) biosynthesis and is required for C28 fatty acid elongation in stem. Despite its classification as a BAHD acyltransferase based on sequence homology, CER2 does not seem to share the catalytic mechanism of the members of the BAHD family. The protein is Protein ECERIFERUM 2 (CER2) of Arabidopsis thaliana (Mouse-ear cress).